Consider the following 218-residue polypeptide: Zinc finger CCHC-type and RNA-binding motif-containing protein 1 (218 aa).

An RRM domain is found at 10-88; it reads STVYVSNLPF…RAIKASIAKD (79 aa). A CCHC-type zinc finger spans residues 105–122; sequence SRCYECGDTGHLSYACPK. The tract at residues 119-218 is disordered; sequence ACPKNMLGER…YFSDEDELSD (100 aa). Residues 132–188 adopt a coiled-coil conformation; it reads QKKEKKKRKRLVEEEEEEVVEEEESEDEGEDPALDSLSQAIAFQQARIDEEKNKYRH. Residues 144–164 are compositionally biased toward acidic residues; the sequence is EEEEEEVVEEEESEDEGEDPA. Over residues 178–201 the composition is skewed to basic and acidic residues; that stretch reads RIDEEKNKYRHDPAEASTSEDSRR.

Component of the U11/U12 snRNPs that are part of the U12-type spliceosome.

The protein resides in the nucleus. This chain is Zinc finger CCHC-type and RNA-binding motif-containing protein 1 (zcrb1), found in Xenopus laevis (African clawed frog).